Here is a 351-residue protein sequence, read N- to C-terminus: Dihydroorotate dehydrogenase (quinone) (351 aa).

FMN-binding positions include 65-69 (AGLDK) and Thr-89. Lys-69 contacts substrate. Substrate is bound at residue 114-118 (NRLGF). The FMN site is built by Asn-150 and Asn-183. Residue Asn-183 coordinates substrate. Ser-186 acts as the Nucleophile in catalysis. A substrate-binding site is contributed by Asn-188. Residues Lys-228 and Thr-256 each contribute to the FMN site. 257–258 (NT) contributes to the substrate binding site. Residues Gly-279, Gly-308, and 329-330 (YT) contribute to the FMN site.

It belongs to the dihydroorotate dehydrogenase family. Type 2 subfamily. Monomer. FMN serves as cofactor.

It is found in the cell membrane. The catalysed reaction is (S)-dihydroorotate + a quinone = orotate + a quinol. Its pathway is pyrimidine metabolism; UMP biosynthesis via de novo pathway; orotate from (S)-dihydroorotate (quinone route): step 1/1. In terms of biological role, catalyzes the conversion of dihydroorotate to orotate with quinone as electron acceptor. This Acidovorax sp. (strain JS42) protein is Dihydroorotate dehydrogenase (quinone).